We begin with the raw amino-acid sequence, 367 residues long: ELAV-like protein 3 (367 aa).

3 consecutive RRM domains span residues 39–117 (TNLI…YARP), 125–205 (ANLY…FANN), and 284–362 (WCIF…FKTS).

It belongs to the RRM elav family. As to quaternary structure, interacts with MAP1B light chain LC1. Brain specific. Expressed in the hippocampus with expression in CA1, CA3 and dentate gyrus.

RNA-binding protein that binds to AU-rich element (ARE) sequences of target mRNAs, including VEGF mRNA. May also bind poly-A tracts via RRM 3. May be involved in neuronal differentiation and maintenance. Plays a role in the stabilization of GAP43 mRNA and in spatial learning. This is ELAV-like protein 3 (Elavl3) from Mus musculus (Mouse).